Here is a 478-residue protein sequence, read N- to C-terminus: RNA exonuclease 3 (478 aa).

One can recognise an Exonuclease domain in the interval 320–465 (VLALDCEMAF…EDAIAAMDVI (146 aa)).

This sequence belongs to the REXO1/REXO3 family.

It localises to the cytoplasm. Its subcellular location is the nucleus. Functionally, 3' to 5' exoribonuclease required for proper 3' end maturation of MRP RNA and of the U5L snRNA. In Kluyveromyces lactis (strain ATCC 8585 / CBS 2359 / DSM 70799 / NBRC 1267 / NRRL Y-1140 / WM37) (Yeast), this protein is RNA exonuclease 3 (REX3).